We begin with the raw amino-acid sequence, 165 residues long: Protoporphyrinogen IX oxidase (165 aa).

Helical transmembrane passes span 26-46 (LHVI…RLFV), 77-97 (AMIA…IVDW), 99-119 (MLWP…HMWL), and 145-165 (PTLL…YWGF). His-27 serves as a coordination point for heme. A heme-binding site is contributed by Lys-105.

This sequence belongs to the HemJ family. Homodimer. Heme b serves as cofactor.

It localises to the cell membrane. The catalysed reaction is protoporphyrinogen IX + 3 A = protoporphyrin IX + 3 AH2. Its pathway is porphyrin-containing compound metabolism; protoporphyrin-IX biosynthesis; protoporphyrin-IX from protoporphyrinogen-IX: step 1/1. Catalyzes the oxidation of protoporphyrinogen IX to protoporphyrin IX. Is involved in the biosynthesis of tetrapyrrole molecules like heme and chlorophyll. Does not use oxygen or artificial electron acceptors such as menadione or benzoquinone. The sequence is that of Protoporphyrinogen IX oxidase from Cereibacter sphaeroides (strain ATCC 17023 / DSM 158 / JCM 6121 / CCUG 31486 / LMG 2827 / NBRC 12203 / NCIMB 8253 / ATH 2.4.1.) (Rhodobacter sphaeroides).